Consider the following 163-residue polypeptide: Putative pre-16S rRNA nuclease (163 aa).

Belongs to the YqgF nuclease family.

Its subcellular location is the cytoplasm. Functionally, could be a nuclease involved in processing of the 5'-end of pre-16S rRNA. The polypeptide is Putative pre-16S rRNA nuclease (Nitrobacter hamburgensis (strain DSM 10229 / NCIMB 13809 / X14)).